Consider the following 283-residue polypeptide: Interferon alpha-inducible protein 27-like protein 2B (283 aa).

The transit peptide at 1 to 90 directs the protein to the mitochondrion; the sequence is MKRKFVGAAI…AVGTATGARA (90 aa). The tract at residues 90–120 is disordered; that stretch reads AEGSMGASREQESGPQDPPQELQEPQEPPSC. 3 helical membrane passes run 130–150, 176–196, and 202–222; these read FVGAAIGGALAVAGAPIALSA, GGGIAAGGLVATLQSVGILGL, and IILGAVGAATGATAAGAMGAC. Residues 227–283 form a disordered region; sequence PGLQDLQQEPKEPQEPQELQKQQEPQEPQELQKQQETQETQETQELQKTQEPPSYEK. A compositionally biased stretch (low complexity) spans 242–283; it reads PQELQKQQEPQEPQELQKQQETQETQETQELQKTQEPPSYEK.

Belongs to the IFI6/IFI27 family. Homooligomer. Interacts with BAK1. Interacts with BAX. Interacts with adenine nucleotide translocase.

It localises to the mitochondrion inner membrane. In terms of biological role, functions in the intrinsic apoptotic signaling pathway and may have an interferon-induced antiviral activity. In Mus musculus (Mouse), this protein is Interferon alpha-inducible protein 27-like protein 2B.